We begin with the raw amino-acid sequence, 642 residues long: Threonine--tRNA ligase (642 aa).

Positions 1-65 constitute a TGS domain; sequence MSDIITVTLP…DEDVKLQIFT (65 aa). Residues 248–541 form a catalytic region; that stretch reads DHRKLGKELD…LIEHFAGAFP (294 aa). Zn(2+) is bound by residues cysteine 342, histidine 393, and histidine 518.

It belongs to the class-II aminoacyl-tRNA synthetase family. In terms of assembly, homodimer. Zn(2+) serves as cofactor.

Its subcellular location is the cytoplasm. The catalysed reaction is tRNA(Thr) + L-threonine + ATP = L-threonyl-tRNA(Thr) + AMP + diphosphate + H(+). Catalyzes the attachment of threonine to tRNA(Thr) in a two-step reaction: L-threonine is first activated by ATP to form Thr-AMP and then transferred to the acceptor end of tRNA(Thr). Also edits incorrectly charged L-seryl-tRNA(Thr). The sequence is that of Threonine--tRNA ligase from Myxococcus xanthus (strain DK1622).